We begin with the raw amino-acid sequence, 562 residues long: Proton channel OTOP2 (562 aa).

The disordered stretch occupies residues 1–20 (MSEELAQGPKESPPAPRAGP). The next 12 membrane-spanning stretches (helical) occupy residues 30-50 (LLSV…ISGG), 62-82 (VFAL…FYLL), 100-120 (PIWL…MDVF), 137-157 (ILHP…LWVS), 169-189 (TWCG…AAVV), 241-261 (FYLY…LYVM), 289-309 (FFAG…VFII), 324-344 (ALVI…LVSL), 371-391 (LLMG…VAVV), 402-422 (LNLT…MFII), 495-515 (DISL…AFGA), and 527-547 (FYGY…GIFY).

It belongs to the otopetrin family.

The protein localises to the cell membrane. The enzyme catalyses H(+)(in) = H(+)(out). Actives at neutral and alkaline extracellular pH, acid extracellular pH appears to inhibit the channel. Insensitive to activation by Zn(2+). In terms of biological role, proton-selective ion channel open at neutral pH. Actives at neutral and alkaline extracellular pH, likely participates in some alkali-related physiological activities. The protein is Proton channel OTOP2 of Homo sapiens (Human).